We begin with the raw amino-acid sequence, 268 residues long: Shikimate dehydrogenase (NADP(+)) (268 aa).

Shikimate is bound by residues serine 13–serine 15 and threonine 60. The Proton acceptor role is filled by lysine 64. Glutamate 76 provides a ligand contact to NADP(+). Asparagine 85 and aspartate 100 together coordinate shikimate. NADP(+)-binding positions include glycine 124 to alanine 128, asparagine 148 to arginine 153, and isoleucine 209. Tyrosine 211 serves as a coordination point for shikimate. Glycine 232 serves as a coordination point for NADP(+).

The protein belongs to the shikimate dehydrogenase family. Homodimer.

It carries out the reaction shikimate + NADP(+) = 3-dehydroshikimate + NADPH + H(+). It participates in metabolic intermediate biosynthesis; chorismate biosynthesis; chorismate from D-erythrose 4-phosphate and phosphoenolpyruvate: step 4/7. Functionally, involved in the biosynthesis of the chorismate, which leads to the biosynthesis of aromatic amino acids. Catalyzes the reversible NADPH linked reduction of 3-dehydroshikimate (DHSA) to yield shikimate (SA). This chain is Shikimate dehydrogenase (NADP(+)), found in Staphylococcus aureus (strain MRSA252).